Here is a 255-residue protein sequence, read N- to C-terminus: Octanoyltransferase (255 aa).

The BPL/LPL catalytic domain occupies 54-238; it reads GDAAELVWLL…AFTEIFGATV (185 aa). Residues 92–99, 167–169, and 180–182 contribute to the substrate site; these read RGGQLTYH, AIG, and GIA. C198 functions as the Acyl-thioester intermediate in the catalytic mechanism.

Belongs to the LipB family.

The protein resides in the cytoplasm. It carries out the reaction octanoyl-[ACP] + L-lysyl-[protein] = N(6)-octanoyl-L-lysyl-[protein] + holo-[ACP] + H(+). Its pathway is protein modification; protein lipoylation via endogenous pathway; protein N(6)-(lipoyl)lysine from octanoyl-[acyl-carrier-protein]: step 1/2. In terms of biological role, catalyzes the transfer of endogenously produced octanoic acid from octanoyl-acyl-carrier-protein onto the lipoyl domains of lipoate-dependent enzymes. Lipoyl-ACP can also act as a substrate although octanoyl-ACP is likely to be the physiological substrate. This Rhodopseudomonas palustris (strain HaA2) protein is Octanoyltransferase.